A 144-amino-acid chain; its full sequence is Aspartate carbamoyltransferase regulatory chain (144 aa).

Cysteine 103, cysteine 108, cysteine 132, and cysteine 135 together coordinate Zn(2+).

Belongs to the PyrI family. Contains catalytic and regulatory chains. It depends on Zn(2+) as a cofactor.

Involved in allosteric regulation of aspartate carbamoyltransferase. This is Aspartate carbamoyltransferase regulatory chain from Clostridium tetani (strain Massachusetts / E88).